Consider the following 114-residue polypeptide: Endoribonuclease MazF2 (114 aa).

This sequence belongs to the PemK/MazF family. As to quaternary structure, probably forms a complex with cognate antitoxin MazE2.

Toxic component of a type II toxin-antitoxin (TA) system. Acts as an endoribonuclease on single-strand RNA, cleaving between the second and third bases in the sequences CUCCU and UUCCU. Neutralized by coexpression with cognate antitoxin MazE2. This Mycobacterium bovis (strain ATCC BAA-935 / AF2122/97) protein is Endoribonuclease MazF2 (mazF2).